A 60-amino-acid polypeptide reads, in one-letter code: Mastoparan-VB1 (60 aa).

A signal peptide spans 1–23 (MKNTILLLFTAFIFLSGFFGMSA). A propeptide spanning residues 24-45 (EALADPKADPLAGPFPDADPDP) is cleaved from the precursor. AXPX repeat units follow at residues 27-30 (ADPK), 31-34 (ADPL), 35-38 (AGPF), and 40-43 (DADP). Leucine 59 carries the leucine amide modification.

In terms of tissue distribution, expressed by the venom gland.

It is found in the secreted. Its subcellular location is the target cell membrane. Functionally, antimicrobial peptide. Shows activity against both Gram-positive (S.aureus MIC=1.9-3.75 ug/ml) and -negative (E.coli MIC=15-60 ug/ml) bacteria, as well against fungi (C.albicans MIC=15 ug/ml). Also promotes moderate mast cell degranulation. Does not show hemolytic activity on rabbit and human erythrocytes. Its mast cell degranulation activity may be related to the activation of G-protein coupled receptors in mast cells as well as interaction with other proteins located in cell endosomal membranes in the mast cells. The polypeptide is Mastoparan-VB1 (Vespa bicolor (Black shield wasp)).